The following is a 322-amino-acid chain: Beta-ketoacyl-[acyl-carrier-protein] synthase III (322 aa).

Catalysis depends on residues Cys-112 and His-249. Residues 250–254 (QANQR) form an ACP-binding region. The active site involves Asn-279.

Belongs to the thiolase-like superfamily. FabH family. In terms of assembly, homodimer.

It is found in the cytoplasm. It carries out the reaction malonyl-[ACP] + acetyl-CoA + H(+) = 3-oxobutanoyl-[ACP] + CO2 + CoA. It functions in the pathway lipid metabolism; fatty acid biosynthesis. Catalyzes the condensation reaction of fatty acid synthesis by the addition to an acyl acceptor of two carbons from malonyl-ACP. Catalyzes the first condensation reaction which initiates fatty acid synthesis and may therefore play a role in governing the total rate of fatty acid production. Possesses both acetoacetyl-ACP synthase and acetyl transacylase activities. Its substrate specificity determines the biosynthesis of branched-chain and/or straight-chain of fatty acids. This chain is Beta-ketoacyl-[acyl-carrier-protein] synthase III, found in Caulobacter vibrioides (strain ATCC 19089 / CIP 103742 / CB 15) (Caulobacter crescentus).